A 400-amino-acid chain; its full sequence is Nicotinate phosphoribosyltransferase (400 aa).

Histidine 220 is modified (phosphohistidine; by autocatalysis).

The protein belongs to the NAPRTase family. Transiently phosphorylated on a His residue during the reaction cycle. Phosphorylation strongly increases the affinity for substrates and increases the rate of nicotinate D-ribonucleotide production. Dephosphorylation regenerates the low-affinity form of the enzyme, leading to product release.

The catalysed reaction is nicotinate + 5-phospho-alpha-D-ribose 1-diphosphate + ATP + H2O = nicotinate beta-D-ribonucleotide + ADP + phosphate + diphosphate. The protein operates within cofactor biosynthesis; NAD(+) biosynthesis; nicotinate D-ribonucleotide from nicotinate: step 1/1. Its function is as follows. Catalyzes the synthesis of beta-nicotinate D-ribonucleotide from nicotinate and 5-phospho-D-ribose 1-phosphate at the expense of ATP. The chain is Nicotinate phosphoribosyltransferase from Salmonella typhi.